A 152-amino-acid chain; its full sequence is MATLLRVSSLCRANRASAFKSLLIRPLPCLSQDLHMVQTSQIHTSPNHHAGSKAASMHWTGERALSVALLGLLPAAYLYPGAAMDYSLAAALTLHGHWGLGQVVTDYVHGETKIKMANTSLFALSALTFAGLCYFNYHDVGICKAVAMLWSL.

The N-terminal 21 residues, 1-21, are a transit peptide targeting the mitochondrion; the sequence is MATLLRVSSLCRANRASAFKS. Over 22–56 the chain is Mitochondrial matrix; it reads LLIRPLPCLSQDLHMVQTSQIHTSPNHHAGSKAAS. Residues 57–78 form a helical membrane-spanning segment; that stretch reads MHWTGERALSVALLGLLPAAYL. The Mitochondrial intermembrane portion of the chain corresponds to 79–83; it reads YPGAA. Residues 84–104 form a helical membrane-spanning segment; sequence MDYSLAAALTLHGHWGLGQVV. Residue histidine 95 participates in heme b binding. The Mitochondrial matrix segment spans residues 105 to 113; that stretch reads TDYVHGETK. Tyrosine 107 is an a ubiquinone binding site. Residues 114–135 form a helical membrane-spanning segment; the sequence is IKMANTSLFALSALTFAGLCYF. The Mitochondrial intermembrane portion of the chain corresponds to 136–152; the sequence is NYHDVGICKAVAMLWSL.

The protein belongs to the CybS family. In terms of assembly, component of complex II composed of four subunits: the flavoprotein (FP) SDHA, iron-sulfur protein (IP) SDHB, and a cytochrome b560 composed of SDHC and SDHD.

The protein localises to the mitochondrion inner membrane. It participates in carbohydrate metabolism; tricarboxylic acid cycle. Its function is as follows. Membrane-anchoring subunit of succinate dehydrogenase (SDH) that is involved in complex II of the mitochondrial electron transport chain and is responsible for transferring electrons from succinate to ubiquinone (coenzyme Q). SDH also oxidizes malate to the non-canonical enol form of oxaloacetate, enol-oxaloacetate. Enol-oxaloacetate, which is a potent inhibitor of the succinate dehydrogenase activity, is further isomerized into keto-oxaloacetate. This Xenopus laevis (African clawed frog) protein is Succinate dehydrogenase [ubiquinone] cytochrome b small subunit B, mitochondrial (sdhd-b).